The chain runs to 329 residues: R-linalool synthase (329 aa).

Asp-79 is a Mg(2+) binding site. A DDXXD motif motif is present at residues 79–83 (DDQFD). Residue Arg-172 participates in substrate binding. The Mg(2+) site is built by Asn-218 and Ser-222. Residues 218–226 (NELHSFEKD) carry the NXXXSXXXD motif motif. Position 225 (Lys-225) interacts with substrate. A Mg(2+)-binding site is contributed by Asp-226. 308 to 309 (RY) contributes to the substrate binding site.

This sequence belongs to the terpene synthase family. In terms of assembly, homodimer. Mg(2+) serves as cofactor.

The catalysed reaction is (2E)-geranyl diphosphate + H2O = (R)-linalool + diphosphate. The enzyme catalyses (2E,6E)-farnesyl diphosphate + H2O = (6E)-nerolidol + diphosphate. In vitro, catalyzes the formation of R-linalool from geranyl diphosphate (GPP). Can also accept farnesyl diphosphate (FPP) as substrate to produce trans-nerolidol. The chain is R-linalool synthase from Streptomyces clavuligerus.